A 203-amino-acid chain; its full sequence is Small ribosomal subunit protein uS4 (203 aa).

An S4 RNA-binding domain is found at 93–173 (RRFDNVVFRA…IPSWIQVDKA (81 aa)).

Belongs to the universal ribosomal protein uS4 family. In terms of assembly, part of the 30S ribosomal subunit. Contacts protein S5. The interaction surface between S4 and S5 is involved in control of translational fidelity.

Functionally, one of the primary rRNA binding proteins, it binds directly to 16S rRNA where it nucleates assembly of the body of the 30S subunit. Its function is as follows. With S5 and S12 plays an important role in translational accuracy. This chain is Small ribosomal subunit protein uS4, found in Pelodictyon phaeoclathratiforme (strain DSM 5477 / BU-1).